Here is a 446-residue protein sequence, read N- to C-terminus: Probable glycine dehydrogenase (decarboxylating) subunit 1 (446 aa).

The protein belongs to the GcvP family. N-terminal subunit subfamily. In terms of assembly, the glycine cleavage system is composed of four proteins: P, T, L and H. In this organism, the P 'protein' is a heterodimer of two subunits.

The catalysed reaction is N(6)-[(R)-lipoyl]-L-lysyl-[glycine-cleavage complex H protein] + glycine + H(+) = N(6)-[(R)-S(8)-aminomethyldihydrolipoyl]-L-lysyl-[glycine-cleavage complex H protein] + CO2. Functionally, the glycine cleavage system catalyzes the degradation of glycine. The P protein binds the alpha-amino group of glycine through its pyridoxal phosphate cofactor; CO(2) is released and the remaining methylamine moiety is then transferred to the lipoamide cofactor of the H protein. The chain is Probable glycine dehydrogenase (decarboxylating) subunit 1 from Methylocella silvestris (strain DSM 15510 / CIP 108128 / LMG 27833 / NCIMB 13906 / BL2).